The sequence spans 905 residues: Probable aromatic-L-amino-acid decarboxylase (905 aa).

The disordered stretch occupies residues 250–296 (YLNPIIKTPPHNERVPKMKTNISKTRKKKGKVSDASKDSRPSETKKE). The segment covering 280 to 296 (KVSDASKDSRPSETKKE) has biased composition (basic and acidic residues). 2 residues coordinate pyridoxal 5'-phosphate: T492 and S591. The residue at position 648 (K648) is an N6-(pyridoxal phosphate)lysine. A disordered region spans residues 861-905 (HTAEYADPPGKSNKSPQVAAKGELPSAAPPSSRTPNSDISEKSDR). Residues 889–898 (PPSSRTPNSD) are compositionally biased toward polar residues.

Belongs to the group II decarboxylase family. In terms of assembly, homodimer. The cofactor is pyridoxal 5'-phosphate.

It carries out the reaction L-dopa + H(+) = dopamine + CO2. It catalyses the reaction 5-hydroxy-L-tryptophan + H(+) = serotonin + CO2. The protein operates within catecholamine biosynthesis; dopamine biosynthesis; dopamine from L-tyrosine: step 2/2. Catalyzes the decarboxylation of L-3,4-dihydroxyphenylalanine (DOPA) to dopamine, L-5-hydroxytryptophan to serotonin and L-tryptophan to tryptamine. The chain is Probable aromatic-L-amino-acid decarboxylase (hdl-1) from Caenorhabditis elegans.